The following is a 195-amino-acid chain: FMN-dependent NADH:quinone oxidoreductase (195 aa).

Residues Ser10, 16–18, 91–94, and 135–138 each bind FMN; these read SQS, MYNF, and TRGG.

This sequence belongs to the azoreductase type 1 family. Homodimer. FMN is required as a cofactor.

It catalyses the reaction 2 a quinone + NADH + H(+) = 2 a 1,4-benzosemiquinone + NAD(+). It carries out the reaction N,N-dimethyl-1,4-phenylenediamine + anthranilate + 2 NAD(+) = 2-(4-dimethylaminophenyl)diazenylbenzoate + 2 NADH + 2 H(+). In terms of biological role, quinone reductase that provides resistance to thiol-specific stress caused by electrophilic quinones. Its function is as follows. Also exhibits azoreductase activity. Catalyzes the reductive cleavage of the azo bond in aromatic azo compounds to the corresponding amines. This chain is FMN-dependent NADH:quinone oxidoreductase, found in Vibrio vulnificus (strain YJ016).